The following is a 64-amino-acid chain: Large ribosomal subunit protein uL1 (64 aa).

The protein belongs to the universal ribosomal protein uL1 family. In terms of assembly, part of the 50S ribosomal subunit.

Its function is as follows. Binds directly to 23S rRNA. The L1 stalk is quite mobile in the ribosome, and is involved in E site tRNA release. Protein L1 is also a translational repressor protein, it controls the translation of the L11 operon by binding to its mRNA. The protein is Large ribosomal subunit protein uL1 (rplA) of Streptomyces lavendulae.